The sequence spans 383 residues: Serine protease 23 (383 aa).

Residues 1–19 (MAGIPGLLFLLFFLLCAVG) form the signal peptide. N-linked (GlcNAc...) asparagine glycosylation occurs at asparagine 93. Serine 109 carries the phosphoserine; by FAM20C modification. Cysteine 160 and cysteine 176 form a disulfide bridge. The active-site Charge relay system is histidine 175. N-linked (GlcNAc...) asparagine glycosylation is present at asparagine 207. Active-site charge relay system residues include aspartate 240 and serine 316.

It belongs to the peptidase S1 family.

It localises to the secreted. In Homo sapiens (Human), this protein is Serine protease 23 (PRSS23).